A 345-amino-acid polypeptide reads, in one-letter code: Ryncolin-4 (345 aa).

An N-terminal signal peptide occupies residues Met1 to Gly19. The interval Ile48 to Asn118 is disordered. The Collagen-like domain occupies Gly57 to Gly114. Basic and acidic residues predominate over residues Asp86–Asp116. In terms of domain architecture, Fibrinogen C-terminal spans Asp121 to Lys339. Cystine bridges form between Cys130–Cys158 and Cys282–Cys295.

Belongs to the ficolin lectin family. Veficolin subfamily. In terms of processing, hydroxylated, possibly at Pro-80. As to expression, expressed by the venom duct.

It localises to the secreted. Its function is as follows. Initiates complement activation and/or interferes in platelet aggregation and/or blood coagulation. This Cerberus rynchops (Dog-faced water snake) protein is Ryncolin-4.